A 48-amino-acid chain; its full sequence is Delta-stichotoxin-Hcr1b (48 aa).

Disulfide bonds link cysteine 3/cysteine 43, cysteine 5/cysteine 33, and cysteine 26/cysteine 44.

The protein belongs to the sea anemone sodium channel inhibitory toxin family. Type II subfamily.

The protein resides in the secreted. Its subcellular location is the nematocyst. Functionally, binds to site 3 of voltage-gated sodium channels and inhibits the inactivation process. This is Delta-stichotoxin-Hcr1b from Radianthus crispa (Leathery sea anemone).